A 522-amino-acid polypeptide reads, in one-letter code: Lysine--tRNA ligase (522 aa).

The 'HIGH' region signature appears at 44-52; the sequence is PSGLPHIGT. The 'KMSKS' region signature appears at 290 to 294; sequence KISKS. Residue Lys-293 participates in ATP binding.

Belongs to the class-I aminoacyl-tRNA synthetase family.

It localises to the cytoplasm. It carries out the reaction tRNA(Lys) + L-lysine + ATP = L-lysyl-tRNA(Lys) + AMP + diphosphate. In Rickettsia peacockii (strain Rustic), this protein is Lysine--tRNA ligase.